The sequence spans 459 residues: tRNA-guanine(15) transglycosylase (459 aa).

Aspartate 90 (nucleophile) is an active-site residue. Substrate contacts are provided by aspartate 125 and glycine 192. Zn(2+) contacts are provided by cysteine 275, cysteine 277, and cysteine 280.

It belongs to the archaeosine tRNA-ribosyltransferase family. Zn(2+) is required as a cofactor.

It catalyses the reaction guanosine(15) in tRNA + 7-cyano-7-deazaguanine = 7-cyano-7-carbaguanosine(15) in tRNA + guanine. It functions in the pathway tRNA modification; archaeosine-tRNA biosynthesis. Its function is as follows. Exchanges the guanine residue with 7-cyano-7-deazaguanine (preQ0) at position 15 in the dihydrouridine loop (D-loop) of archaeal tRNAs. This chain is tRNA-guanine(15) transglycosylase, found in Methanopyrus kandleri (strain AV19 / DSM 6324 / JCM 9639 / NBRC 100938).